The sequence spans 120 residues: MTMTMSYKAIEKIPRCSWNREEPGEQWNKIYSVETGLLGTYSFEWQSQVANKTMRKRNTNSICGRQHEPHCPVSITRAIAQPQLLTFPDSLASRGGHMTQSGQCHVSGSLLGRGHKSRGR.

Positions 90–120 are disordered; it reads SLASRGGHMTQSGQCHVSGSLLGRGHKSRGR.

This is an uncharacterized protein from Homo sapiens (Human).